The following is a 297-amino-acid chain: Phosphoribosylaminoimidazole-succinocarboxamide synthase (297 aa).

The protein belongs to the SAICAR synthetase family.

It catalyses the reaction 5-amino-1-(5-phospho-D-ribosyl)imidazole-4-carboxylate + L-aspartate + ATP = (2S)-2-[5-amino-1-(5-phospho-beta-D-ribosyl)imidazole-4-carboxamido]succinate + ADP + phosphate + 2 H(+). The protein operates within purine metabolism; IMP biosynthesis via de novo pathway; 5-amino-1-(5-phospho-D-ribosyl)imidazole-4-carboxamide from 5-amino-1-(5-phospho-D-ribosyl)imidazole-4-carboxylate: step 1/2. This chain is Phosphoribosylaminoimidazole-succinocarboxamide synthase, found in Methylobacillus flagellatus (strain ATCC 51484 / DSM 6875 / VKM B-1610 / KT).